Consider the following 117-residue polypeptide: Ribosome-binding factor A (117 aa).

Belongs to the RbfA family. Monomer. Binds 30S ribosomal subunits, but not 50S ribosomal subunits or 70S ribosomes.

It localises to the cytoplasm. Functionally, one of several proteins that assist in the late maturation steps of the functional core of the 30S ribosomal subunit. Associates with free 30S ribosomal subunits (but not with 30S subunits that are part of 70S ribosomes or polysomes). Required for efficient processing of 16S rRNA. May interact with the 5'-terminal helix region of 16S rRNA. This Bacillus licheniformis (strain ATCC 14580 / DSM 13 / JCM 2505 / CCUG 7422 / NBRC 12200 / NCIMB 9375 / NCTC 10341 / NRRL NRS-1264 / Gibson 46) protein is Ribosome-binding factor A.